Reading from the N-terminus, the 263-residue chain is Hydroxyethylthiazole kinase 1 (263 aa).

M42 is a binding site for substrate. Residues K118 and T164 each contribute to the ATP site. G191 contributes to the substrate binding site.

The protein belongs to the Thz kinase family. It depends on Mg(2+) as a cofactor.

It catalyses the reaction 5-(2-hydroxyethyl)-4-methylthiazole + ATP = 4-methyl-5-(2-phosphooxyethyl)-thiazole + ADP + H(+). The protein operates within cofactor biosynthesis; thiamine diphosphate biosynthesis; 4-methyl-5-(2-phosphoethyl)-thiazole from 5-(2-hydroxyethyl)-4-methylthiazole: step 1/1. Its function is as follows. Catalyzes the phosphorylation of the hydroxyl group of 4-methyl-5-beta-hydroxyethylthiazole (THZ). The sequence is that of Hydroxyethylthiazole kinase 1 from Clostridium botulinum (strain Okra / Type B1).